We begin with the raw amino-acid sequence, 128 residues long: MFYSIVAIFVGAGFGAVLRWFLALALNEFFPAVPLGTLAANLIGGYVIGVAAVVFTARVGLPPEWRLFVITGFLGGLTTFSTYSVEVMTHAVQGEFGWAIAVAALHLTGSFTLTALGMWTARAWFAAA.

4 helical membrane passes run 5–25 (IVAI…LALA), 35–55 (LGTL…AVVF), 67–87 (LFVI…SVEV), and 96–116 (FGWA…LTAL). Residues Gly-75 and Thr-78 each contribute to the Na(+) site.

This sequence belongs to the fluoride channel Fluc/FEX (TC 1.A.43) family.

Its subcellular location is the cell inner membrane. It catalyses the reaction fluoride(in) = fluoride(out). Its activity is regulated as follows. Na(+) is not transported, but it plays an essential structural role and its presence is essential for fluoride channel function. Functionally, fluoride-specific ion channel. Important for reducing fluoride concentration in the cell, thus reducing its toxicity. This is Fluoride-specific ion channel FluC from Burkholderia ambifaria (strain MC40-6).